The primary structure comprises 197 residues: Holliday junction branch migration complex subunit RuvA (197 aa).

The domain I stretch occupies residues 1–64 (MIGRLSGKLI…EDAHLLYGFA (64 aa)). Residues 65-143 (SKEERQTFRQ…TGGNLTVPGG (79 aa)) are domain II. The interval 143-147 (GLPFA) is flexible linker. The tract at residues 148–197 (ATPDEKSDIVNALLALGYNEKEAAAATKSLPADVTVSEGVRLALKSLMKV) is domain III.

This sequence belongs to the RuvA family. Homotetramer. Forms an RuvA(8)-RuvB(12)-Holliday junction (HJ) complex. HJ DNA is sandwiched between 2 RuvA tetramers; dsDNA enters through RuvA and exits via RuvB. An RuvB hexamer assembles on each DNA strand where it exits the tetramer. Each RuvB hexamer is contacted by two RuvA subunits (via domain III) on 2 adjacent RuvB subunits; this complex drives branch migration. In the full resolvosome a probable DNA-RuvA(4)-RuvB(12)-RuvC(2) complex forms which resolves the HJ.

The protein localises to the cytoplasm. In terms of biological role, the RuvA-RuvB-RuvC complex processes Holliday junction (HJ) DNA during genetic recombination and DNA repair, while the RuvA-RuvB complex plays an important role in the rescue of blocked DNA replication forks via replication fork reversal (RFR). RuvA specifically binds to HJ cruciform DNA, conferring on it an open structure. The RuvB hexamer acts as an ATP-dependent pump, pulling dsDNA into and through the RuvAB complex. HJ branch migration allows RuvC to scan DNA until it finds its consensus sequence, where it cleaves and resolves the cruciform DNA. This Chromobacterium violaceum (strain ATCC 12472 / DSM 30191 / JCM 1249 / CCUG 213 / NBRC 12614 / NCIMB 9131 / NCTC 9757 / MK) protein is Holliday junction branch migration complex subunit RuvA.